Here is a 299-residue protein sequence, read N- to C-terminus: MSDAEQSNEPIATPRGQAALLGPVEVRALAEEFGVRPTKQLGQNFVHDANTVRRIVTTAGVTRDDVVLEVGPGLGSLTMALMDVVDRVIAVEIDPNLAARLPKTVAERAPELADRLTVVEADAMRVLPSQIPGEPTALVANLPYNVAVPVLLHLFASLPSLRTALVMVQAEVADRLAADPGSKIYGVPSVKANFFGEVRRAGAVGRNVFWPVPKVESGLVRIDRYAEPPWPMDEKHRKQVFAAIDAAFAQRRKTLRAALSGWAGSPAEAERRLLAAGIEPQTRGEMLDAAAFVRLAGGE.

S-adenosyl-L-methionine-binding residues include N44, V46, G71, E92, D122, and N141.

It belongs to the class I-like SAM-binding methyltransferase superfamily. rRNA adenine N(6)-methyltransferase family. RsmA subfamily.

It is found in the cytoplasm. The catalysed reaction is adenosine(1518)/adenosine(1519) in 16S rRNA + 4 S-adenosyl-L-methionine = N(6)-dimethyladenosine(1518)/N(6)-dimethyladenosine(1519) in 16S rRNA + 4 S-adenosyl-L-homocysteine + 4 H(+). Specifically dimethylates two adjacent adenosines (A1518 and A1519) in the loop of a conserved hairpin near the 3'-end of 16S rRNA in the 30S particle. May play a critical role in biogenesis of 30S subunits. This is Ribosomal RNA small subunit methyltransferase A from Rhodococcus erythropolis (strain PR4 / NBRC 100887).